A 342-amino-acid chain; its full sequence is Phosphatidate cytidylyltransferase, mitochondrial (342 aa).

Belongs to the TAM41 family. It depends on Mg(2+) as a cofactor. Co(2+) is required as a cofactor. Requires Cu(2+) as cofactor.

The protein resides in the mitochondrion inner membrane. The enzyme catalyses a 1,2-diacyl-sn-glycero-3-phosphate + CTP + H(+) = a CDP-1,2-diacyl-sn-glycerol + diphosphate. Its pathway is phospholipid metabolism; CDP-diacylglycerol biosynthesis; CDP-diacylglycerol from sn-glycerol 3-phosphate: step 3/3. Catalyzes the formation of CDP-diacylglycerol (CDP-DAG) from phosphatidic acid (PA) in the mitochondrial inner membrane. Required for the biosynthesis of the dimeric phospholipid cardiolipin, which stabilizes supercomplexes of the mitochondrial respiratory chain in the mitochondrial inner membrane. In Drosophila melanogaster (Fruit fly), this protein is Phosphatidate cytidylyltransferase, mitochondrial.